The primary structure comprises 96 residues: MSRRTKKVGLTGKYGTRYGSSLRKQIKKIELMQHAKYLCTFCGKTATKRTCVGIWKCKKCKRKVCGGAWSLTTPAAVAAKSTIIRLRKQKEEAQKS.

The segment at 39–60 (CTFCGKTATKRTCVGIWKCKKC) adopts a C4-type zinc-finger fold.

Belongs to the eukaryotic ribosomal protein eL43 family. In terms of assembly, component of the large ribosomal subunit. Mature ribosomes consist of a small (40S) and a large (60S) subunit. The 40S subunit contains about 32 different proteins and 1 molecule of RNA (18S). The 60S subunit contains about 42 different proteins and 3 molecules of RNA (28S, 5.8S and 5S).

The protein resides in the cytoplasm. Functionally, component of the ribosome, a large ribonucleoprotein complex responsible for the synthesis of proteins in the cell. The small ribosomal subunit (SSU) binds messenger RNAs (mRNAs) and translates the encoded message by selecting cognate aminoacyl-transfer RNA (tRNA) molecules. The large subunit (LSU) contains the ribosomal catalytic site termed the peptidyl transferase center (PTC), which catalyzes the formation of peptide bonds, thereby polymerizing the amino acids delivered by tRNAs into a polypeptide chain. The nascent polypeptides leave the ribosome through a tunnel in the LSU and interact with protein factors that function in enzymatic processing, targeting, and the membrane insertion of nascent chains at the exit of the ribosomal tunnel. In Plasmodium falciparum (isolate 3D7), this protein is Large ribosomal subunit protein eL43.